The sequence spans 342 residues: Global transcription regulator FGP1 (342 aa).

Positions 91–113 are disordered; it reads FSPGEKKRASKKPKKQAGVAKAY.

The protein belongs to the MIT1/WOR1 family.

The protein resides in the nucleus. Global transcriptional regulator of pathogenicity. Regulates many genes during growth in putrescine medium and during infection. Involved in the developmental processes of conidium formation and sexual reproduction and modulates a morphological change that accompanies mycotoxin production. The protein is Global transcription regulator FGP1 of Gibberella zeae (strain ATCC MYA-4620 / CBS 123657 / FGSC 9075 / NRRL 31084 / PH-1) (Wheat head blight fungus).